The following is an 84-amino-acid chain: MKKQMHPDYHPVVFQDASTGKSFLTRSTVTSERTVEWEDGGTYPLLVVDVTSDSHPFWTGAQRVMDTAGRVEKFERRYGKRKAL.

This sequence belongs to the bacterial ribosomal protein bL31 family. Type B subfamily. As to quaternary structure, part of the 50S ribosomal subunit.

The protein is Large ribosomal subunit protein bL31B of Rhodococcus erythropolis (strain PR4 / NBRC 100887).